The chain runs to 211 residues: Probable endopeptidase cgR_2070 (211 aa).

The first 35 residues, 1-35 (MGKHRRNNSNATRKAVAASAVALGATAAIASPAQA), serve as a signal peptide directing secretion. In terms of domain architecture, NlpC/P60 spans 97–211 (ASTGQAIVDA…YMPFHSAVRF (115 aa)). C127 (nucleophile) is an active-site residue. Residue H175 is the Proton acceptor of the active site. H187 is an active-site residue.

It belongs to the peptidase C40 family.

It is found in the secreted. The chain is Probable endopeptidase cgR_2070 from Corynebacterium glutamicum (strain R).